Here is a 292-residue protein sequence, read N- to C-terminus: MSTYLIGDVHGCLDELLALLAQVDFDPQHDTLWLTGDLVARGPASLDVLRYVRSLGPAVRMVLGNHDLHLLAVYAGISRNKPKDRITPLLEAPDADELINWLRRQPVLQVDDELKLIMAHAGITPQWDIETAQMCAREVESVLSSDSYPLFLDAMYGDMPNNWSPELTGLARLRFSTNALTRMRFCFPNGQLDMICKDTPENAPAPLKPWFELPRLVSPEYSIIFGHWASLEGKGVPEGIYGLDTGCCWGGNLTLLRWEDKRYFTQPAFKVEAEITNADEIAAAAKDPFSYL.

It belongs to the Ap4A hydrolase family.

It carries out the reaction P(1),P(4)-bis(5'-adenosyl) tetraphosphate + H2O = 2 ADP + 2 H(+). Its function is as follows. Hydrolyzes diadenosine 5',5'''-P1,P4-tetraphosphate to yield ADP. This chain is Bis(5'-nucleosyl)-tetraphosphatase, symmetrical, found in Yersinia enterocolitica serotype O:8 / biotype 1B (strain NCTC 13174 / 8081).